A 399-amino-acid chain; its full sequence is Elongation factor Tu (399 aa).

One can recognise a tr-type G domain in the interval 10 to 209 (KPHVNIGTIG…AVDDYIPTPA (200 aa)). The G1 stretch occupies residues 19–26 (GHVDHGKT). 19–26 (GHVDHGKT) serves as a coordination point for GTP. Thr26 contributes to the Mg(2+) binding site. The segment at 60–64 (GITIA) is G2. The segment at 81 to 84 (DCPG) is G3. GTP-binding positions include 81-85 (DCPGH) and 136-139 (NKAD). Residues 136–139 (NKAD) are G4. The interval 174–176 (SAL) is G5.

It belongs to the TRAFAC class translation factor GTPase superfamily. Classic translation factor GTPase family. EF-Tu/EF-1A subfamily. In terms of assembly, monomer.

It is found in the cytoplasm. It carries out the reaction GTP + H2O = GDP + phosphate + H(+). Functionally, GTP hydrolase that promotes the GTP-dependent binding of aminoacyl-tRNA to the A-site of ribosomes during protein biosynthesis. This is Elongation factor Tu from Campylobacter lari (strain RM2100 / D67 / ATCC BAA-1060).